We begin with the raw amino-acid sequence, 591 residues long: Complement component C8 beta chain (591 aa).

A signal peptide spans Met-1 to Gly-32. Positions Glu-33–Arg-54 are excised as a propeptide. The 54-residue stretch at Asp-64–Gly-117 folds into the TSP type-1 1 domain. 7 disulfide bridges follow: Cys-65–Cys-100, Cys-76–Cys-110, Cys-79–Cys-116, Cys-122–Cys-133, Cys-127–Cys-146, Cys-140–Cys-155, and Cys-162–Cys-200. 2 C-linked (Man) tryptophan glycosylation sites follow: Trp-70 and Trp-73. Asn-101 carries an N-linked (GlcNAc...) asparagine glycan. The LDL-receptor class A domain maps to Val-120–Arg-157. Positions 138, 141, 143, 145, 151, and 152 each coordinate Ca(2+). The MACPF domain occupies Ile-158–His-504. Asn-243 carries an N-linked (GlcNAc...) asparagine glycan. Transmembrane regions (beta stranded) follow at residues Ser-252–Lys-259, Gly-262–Ser-269, Ala-379–Gly-386, and Val-392–Ser-399. Cys-378 and Cys-403 are oxidised to a cystine. Thr-418 carries the post-translational modification Phosphothreonine. Disulfide bonds link Cys-503–Cys-550, Cys-505–Cys-521, Cys-508–Cys-523, and Cys-525–Cys-534. The 31-residue stretch at Cys-505–Glu-535 folds into the EGF-like domain. In terms of domain architecture, TSP type-1 2 spans Asp-545 to Ser-591. Trp-551 and Trp-554 each carry a C-linked (Man) tryptophan glycan. A disulfide bridge connects residues Cys-557 and Cys-590. The interval Cys-568–Ser-591 is disordered.

This sequence belongs to the complement C6/C7/C8/C9 family. Heterotrimer of 3 chains: alpha (C8A), beta (C8B) and gamma (C8G); the alpha and gamma chains are disulfide bonded. Component of the membrane attack complex (MAC), composed of complement C5b, C6, C7, C8A, C8B, C8G and multiple copies of the pore-forming subunit C9. N-glycosylated; contains one or two bound glycans. Not O-glycosylated.

Its subcellular location is the secreted. It localises to the target cell membrane. With respect to regulation, membrane attack complex (MAC) assembly is inhibited by CD59, thereby protecting self-cells from damage during complement activation. CD59 acts by binding to the beta-haipins of C8 (C8A and C8B), forming an intermolecular beta-sheet that prevents incorporation of the multiple copies of C9 required for complete formation of the osmolytic pore. MAC assembly is also inhibited by clusterin (CLU) chaperones that inhibit polymerization of C9. Its function is as follows. Component of the membrane attack complex (MAC), a multiprotein complex activated by the complement cascade, which inserts into a target cell membrane and forms a pore, leading to target cell membrane rupture and cell lysis. The MAC is initiated by proteolytic cleavage of C5 into complement C5b in response to the classical, alternative, lectin and GZMK complement pathways. The complement pathways consist in a cascade of proteins that leads to phagocytosis and breakdown of pathogens and signaling that strengthens the adaptive immune system. C8B, together with C8A and C8G, inserts into the target membrane, but does not form pores by itself. During MAC assembly, associates with C5b, C6 and C7 to form the C5b8 intermediate complex that inserts into the target membrane and traverses the bilayer increasing membrane rigidity. This Homo sapiens (Human) protein is Complement component C8 beta chain.